A 126-amino-acid chain; its full sequence is Glycine cleavage system H protein (126 aa).

Positions 22–104 (TVTIGITEYA…YEKAWMVKVK (83 aa)) constitute a Lipoyl-binding domain. Position 63 is an N6-lipoyllysine (Lys-63).

Belongs to the GcvH family. The glycine cleavage system is composed of four proteins: P, T, L and H. Requires (R)-lipoate as cofactor.

The glycine cleavage system catalyzes the degradation of glycine. The H protein shuttles the methylamine group of glycine from the P protein to the T protein. Functionally, is also involved in protein lipoylation via its role as an octanoyl/lipoyl carrier protein intermediate. This is Glycine cleavage system H protein from Staphylococcus carnosus (strain TM300).